Reading from the N-terminus, the 643-residue chain is Inner kinetochore subunit cnp3 (643 aa).

2 disordered regions span residues Ser-55–Asp-209 and Ser-224–Ser-386. Low complexity-rich tracts occupy residues Ala-85–Asp-97 and Asp-104–Gly-125. A compositionally biased stretch (basic and acidic residues) spans Asp-166–Thr-185. Composition is skewed to polar residues over residues Tyr-235 to Gln-261, Leu-295 to Gln-304, and Lys-313 to Ser-322. Basic residues-rich tracts occupy residues Val-332–Lys-341 and Gly-360–Lys-370. The segment at residues Lys-333–Glu-345 is a DNA-binding region (a.T hook).

Belongs to the CENP-C/MIF2 family. In terms of assembly, component of the inner kinetochore constitutive centromere-associated network (CCAN) (also known as central kinetochore Sim4 complex in fission yeast), which is composed of at least cnl2, cnp3, cnp20, fta1, fta2, fta3, fta4, fta6, fta7, mal2, mhf1, mhf2, mis6, mis15, mis17, sim4 and wip1.

It localises to the nucleus. Its subcellular location is the nucleoplasm. In terms of biological role, component of the kinetochore, a multiprotein complex that assembles on centromeric DNA and attaches chromosomes to spindle microtubules, mediating chromosome segregation and sister chromatid segregation during meiosis and mitosis. Component of the inner kinetochore constitutive centromere-associated network (CCAN), which serves as a structural platform for outer kinetochore assembly. The polypeptide is Inner kinetochore subunit cnp3 (cnp3) (Schizosaccharomyces pombe (strain 972 / ATCC 24843) (Fission yeast)).